A 376-amino-acid chain; its full sequence is 4-hydroxy-3-methylbut-2-en-1-yl diphosphate synthase (flavodoxin) (376 aa).

4 residues coordinate [4Fe-4S] cluster: C270, C273, C305, and E312.

This sequence belongs to the IspG family. [4Fe-4S] cluster serves as cofactor.

It carries out the reaction (2E)-4-hydroxy-3-methylbut-2-enyl diphosphate + oxidized [flavodoxin] + H2O + 2 H(+) = 2-C-methyl-D-erythritol 2,4-cyclic diphosphate + reduced [flavodoxin]. The protein operates within isoprenoid biosynthesis; isopentenyl diphosphate biosynthesis via DXP pathway; isopentenyl diphosphate from 1-deoxy-D-xylulose 5-phosphate: step 5/6. Converts 2C-methyl-D-erythritol 2,4-cyclodiphosphate (ME-2,4cPP) into 1-hydroxy-2-methyl-2-(E)-butenyl 4-diphosphate. The protein is 4-hydroxy-3-methylbut-2-en-1-yl diphosphate synthase (flavodoxin) of Colwellia psychrerythraea (strain 34H / ATCC BAA-681) (Vibrio psychroerythus).